A 445-amino-acid chain; its full sequence is Phosphoglucosamine mutase (445 aa).

S102 functions as the Phosphoserine intermediate in the catalytic mechanism. The Mg(2+) site is built by S102, D241, D243, and D245. A Phosphoserine modification is found at S102.

It belongs to the phosphohexose mutase family. The cofactor is Mg(2+). Activated by phosphorylation.

The catalysed reaction is alpha-D-glucosamine 1-phosphate = D-glucosamine 6-phosphate. In terms of biological role, catalyzes the conversion of glucosamine-6-phosphate to glucosamine-1-phosphate. This Shewanella piezotolerans (strain WP3 / JCM 13877) protein is Phosphoglucosamine mutase.